Consider the following 242-residue polypeptide: Ubiquinone biosynthesis O-methyltransferase (242 aa).

S-adenosyl-L-methionine-binding residues include Arg44, Gly64, Asp85, and Met129.

Belongs to the methyltransferase superfamily. UbiG/COQ3 family.

It catalyses the reaction a 3-demethylubiquinol + S-adenosyl-L-methionine = a ubiquinol + S-adenosyl-L-homocysteine + H(+). The enzyme catalyses a 3-(all-trans-polyprenyl)benzene-1,2-diol + S-adenosyl-L-methionine = a 2-methoxy-6-(all-trans-polyprenyl)phenol + S-adenosyl-L-homocysteine + H(+). The protein operates within cofactor biosynthesis; ubiquinone biosynthesis. Functionally, O-methyltransferase that catalyzes the 2 O-methylation steps in the ubiquinone biosynthetic pathway. The chain is Ubiquinone biosynthesis O-methyltransferase from Salmonella choleraesuis (strain SC-B67).